Here is a 183-residue protein sequence, read N- to C-terminus: Adenine phosphoribosyltransferase 3 (183 aa).

The protein belongs to the purine/pyrimidine phosphoribosyltransferase family. Homodimer.

It localises to the cytoplasm. It catalyses the reaction AMP + diphosphate = 5-phospho-alpha-D-ribose 1-diphosphate + adenine. The protein operates within purine metabolism; AMP biosynthesis via salvage pathway; AMP from adenine: step 1/1. In terms of biological role, catalyzes a salvage reaction resulting in the formation of AMP, that is energically less costly than de novo synthesis. May contribute to the recycling of adenine into adenylate nucleotides and the inactivation of cytokinins by phosphoribosylation. Possesses low activity toward adenine and cytokinins. The sequence is that of Adenine phosphoribosyltransferase 3 (APT3) from Arabidopsis thaliana (Mouse-ear cress).